The following is an 87-amino-acid chain: Small ribosomal subunit protein bS20 (87 aa).

The protein belongs to the bacterial ribosomal protein bS20 family.

In terms of biological role, binds directly to 16S ribosomal RNA. The protein is Small ribosomal subunit protein bS20 of Clostridium botulinum (strain Eklund 17B / Type B).